A 390-amino-acid chain; its full sequence is Transforming growth factor beta-1 proprotein (390 aa).

The first 29 residues, 1-29, serve as a signal peptide directing secretion; that stretch reads MPPSGLRLLPLLLPLLWLLMLTPGRPVAG. The straightjacket domain stretch occupies residues 30–74; that stretch reads LSTCKTIDMELVKRKRIEAIRGQILSKLRLASPPSQGDVPPGPLP. The interval 75-271 is arm domain; it reads EAILALYNST…ATPLERAQHL (197 aa). N-linked (GlcNAc...) asparagine glycans are attached at residues Asn-82, Asn-136, and Asn-176. Residues 226–252 form a bowtie tail region; it reads DSKDNTLQVDINGFSSGRRGDLATIHG. The short motif at 244–246 is the Cell attachment site element; it reads RGD. 4 disulfides stabilise this stretch: Cys-285-Cys-294, Cys-293-Cys-356, Cys-322-Cys-387, and Cys-326-Cys-389.

Belongs to the TGF-beta family. In terms of assembly, homodimer; disulfide-linked. Interacts with the serine proteases, HTRA1 and HTRA3: the interaction with either inhibits TGFB1-mediated signaling and the HTRA protease activity is required for this inhibition. May interact with THSD4; this interaction may lead to sequestration by FBN1 microfibril assembly and attenuation of TGFB signaling. Interacts with CD109, DPT and ASPN. Interacts with EFEMP2. Interacts with TSKU; the interaction contributes to regulation of the hair cycle. Interacts with TGFBR3. Homodimer; disulfide-linked. Interacts with transforming growth factor beta-1 (TGF-beta-1) chain; interaction is non-covalent and maintains TGF-beta-1 in a latent state; each latency-associated peptide (LAP) monomer interacts with TGF-beta-1 in the other monomer. Interacts with LTBP1; leading to regulation of TGF-beta-1 activation. Interacts with LRRC32/GARP; leading to regulation of TGF-beta-1 activation on the surface of activated regulatory T-cells (Tregs). Interacts with LRRC33/NRROS; leading to regulation of TGF-beta-1 activation in macrophages and microglia. Interacts (via cell attachment site) with integrins ITGAV and ITGB6 (ITGAV:ITGB6), leading to release of the active TGF-beta-1. Interacts with NREP; the interaction results in a decrease in TGFB1 autoinduction. Interacts with HSP90AB1; inhibits latent TGFB1 activation. As to quaternary structure, homodimer; disulfide-linked. Interacts with TGF-beta receptors (TGFBR1 and TGFBR2), leading to signal transduction. Interacts with EFEMP2. Post-translationally, transforming growth factor beta-1 proprotein: The precursor proprotein is cleaved in the Golgi apparatus by FURIN to form Transforming growth factor beta-1 (TGF-beta-1) and Latency-associated peptide (LAP) chains, which remain non-covalently linked, rendering TGF-beta-1 inactive. N-glycosylated. Deglycosylation leads to activation of Transforming growth factor beta-1 (TGF-beta-1); mechanisms triggering deglycosylation-driven activation of TGF-beta-1 are however unclear.

It localises to the secreted. Its subcellular location is the extracellular space. It is found in the extracellular matrix. Functionally, transforming growth factor beta-1 proprotein: Precursor of the Latency-associated peptide (LAP) and Transforming growth factor beta-1 (TGF-beta-1) chains, which constitute the regulatory and active subunit of TGF-beta-1, respectively. In terms of biological role, required to maintain the Transforming growth factor beta-1 (TGF-beta-1) chain in a latent state during storage in extracellular matrix. Associates non-covalently with TGF-beta-1 and regulates its activation via interaction with 'milieu molecules', such as LTBP1, LRRC32/GARP and LRRC33/NRROS, that control activation of TGF-beta-1. Interaction with LRRC33/NRROS regulates activation of TGF-beta-1 in macrophages and microglia. Interaction with LRRC32/GARP controls activation of TGF-beta-1 on the surface of activated regulatory T-cells (Tregs). Interaction with integrins (ITGAV:ITGB6 or ITGAV:ITGB8) results in distortion of the Latency-associated peptide chain and subsequent release of the active TGF-beta-1. Its function is as follows. Multifunctional protein that regulates the growth and differentiation of various cell types and is involved in various processes, such as normal development, immune function, microglia function and responses to neurodegeneration. Activation into mature form follows different steps: following cleavage of the proprotein in the Golgi apparatus, Latency-associated peptide (LAP) and Transforming growth factor beta-1 (TGF-beta-1) chains remain non-covalently linked rendering TGF-beta-1 inactive during storage in extracellular matrix. At the same time, LAP chain interacts with 'milieu molecules', such as LTBP1, LRRC32/GARP and LRRC33/NRROS that control activation of TGF-beta-1 and maintain it in a latent state during storage in extracellular milieus. TGF-beta-1 is released from LAP by integrins (ITGAV:ITGB6 or ITGAV:ITGB8): integrin-binding to LAP stabilizes an alternative conformation of the LAP bowtie tail and results in distortion of the LAP chain and subsequent release of the active TGF-beta-1. Once activated following release of LAP, TGF-beta-1 acts by binding to TGF-beta receptors (TGFBR1 and TGFBR2), which transduce signal. While expressed by many cells types, TGF-beta-1 only has a very localized range of action within cell environment thanks to fine regulation of its activation by Latency-associated peptide chain (LAP) and 'milieu molecules'. Plays an important role in bone remodeling: acts as a potent stimulator of osteoblastic bone formation, causing chemotaxis, proliferation and differentiation in committed osteoblasts. Can promote either T-helper 17 cells (Th17) or regulatory T-cells (Treg) lineage differentiation in a concentration-dependent manner. At high concentrations, leads to FOXP3-mediated suppression of RORC and down-regulation of IL-17 expression, favoring Treg cell development. At low concentrations in concert with IL-6 and IL-21, leads to expression of the IL-17 and IL-23 receptors, favoring differentiation to Th17 cells. Stimulates sustained production of collagen through the activation of CREB3L1 by regulated intramembrane proteolysis (RIP). Mediates SMAD2/3 activation by inducing its phosphorylation and subsequent translocation to the nucleus. Positively regulates odontoblastic differentiation in dental papilla cells, via promotion of IPO7-mediated translocation of phosphorylated SMAD2 to the nucleus and subsequent transcription of target genes. Can induce epithelial-to-mesenchymal transition (EMT) and cell migration in various cell types. The polypeptide is Transforming growth factor beta-1 proprotein (TGFB1) (Bos taurus (Bovine)).